Reading from the N-terminus, the 322-residue chain is Aspartate carbamoyltransferase catalytic subunit (322 aa).

Residues Arg65 and Thr66 each contribute to the carbamoyl phosphate site. Lys93 lines the L-aspartate pocket. Residues Arg115, His143, and Gln146 each contribute to the carbamoyl phosphate site. Positions 176 and 230 each coordinate L-aspartate. Residues Gly271 and Pro272 each contribute to the carbamoyl phosphate site.

It belongs to the aspartate/ornithine carbamoyltransferase superfamily. ATCase family. In terms of assembly, heterododecamer (2C3:3R2) of six catalytic PyrB chains organized as two trimers (C3), and six regulatory PyrI chains organized as three dimers (R2).

The enzyme catalyses carbamoyl phosphate + L-aspartate = N-carbamoyl-L-aspartate + phosphate + H(+). The protein operates within pyrimidine metabolism; UMP biosynthesis via de novo pathway; (S)-dihydroorotate from bicarbonate: step 2/3. In terms of biological role, catalyzes the condensation of carbamoyl phosphate and aspartate to form carbamoyl aspartate and inorganic phosphate, the committed step in the de novo pyrimidine nucleotide biosynthesis pathway. In Brucella abortus (strain S19), this protein is Aspartate carbamoyltransferase catalytic subunit.